Reading from the N-terminus, the 364-residue chain is Ferrochelatase (364 aa).

H211 and E292 together coordinate Fe cation.

The protein belongs to the ferrochelatase family.

The protein localises to the cytoplasm. It carries out the reaction heme b + 2 H(+) = protoporphyrin IX + Fe(2+). It participates in porphyrin-containing compound metabolism; protoheme biosynthesis; protoheme from protoporphyrin-IX: step 1/1. In terms of biological role, catalyzes the ferrous insertion into protoporphyrin IX. This chain is Ferrochelatase, found in Nitrosomonas europaea (strain ATCC 19718 / CIP 103999 / KCTC 2705 / NBRC 14298).